Here is a 324-residue protein sequence, read N- to C-terminus: Glyceraldehyde-3-phosphate dehydrogenase 1 (324 aa).

Residues 13–14 (RI), Asp-35, and Lys-85 contribute to the NAD(+) site. D-glyceraldehyde 3-phosphate-binding positions include 157–159 (SCT), Thr-188, 217–218 (TG), and Arg-240. Cys-158 acts as the Nucleophile in catalysis. NAD(+) is bound at residue Asn-322.

The protein belongs to the glyceraldehyde-3-phosphate dehydrogenase family. In terms of assembly, homotetramer.

Its subcellular location is the cytoplasm. The enzyme catalyses D-glyceraldehyde 3-phosphate + phosphate + NAD(+) = (2R)-3-phospho-glyceroyl phosphate + NADH + H(+). It participates in carbohydrate degradation; glycolysis; pyruvate from D-glyceraldehyde 3-phosphate: step 1/5. The chain is Glyceraldehyde-3-phosphate dehydrogenase 1 (GPD-1) from Globodera rostochiensis (Golden nematode worm).